A 206-amino-acid chain; its full sequence is ATP phosphoribosyltransferase (206 aa).

It belongs to the ATP phosphoribosyltransferase family. Short subfamily. In terms of assembly, heteromultimer composed of HisG and HisZ subunits.

The protein resides in the cytoplasm. It carries out the reaction 1-(5-phospho-beta-D-ribosyl)-ATP + diphosphate = 5-phospho-alpha-D-ribose 1-diphosphate + ATP. It participates in amino-acid biosynthesis; L-histidine biosynthesis; L-histidine from 5-phospho-alpha-D-ribose 1-diphosphate: step 1/9. Functionally, catalyzes the condensation of ATP and 5-phosphoribose 1-diphosphate to form N'-(5'-phosphoribosyl)-ATP (PR-ATP). Has a crucial role in the pathway because the rate of histidine biosynthesis seems to be controlled primarily by regulation of HisG enzymatic activity. The polypeptide is ATP phosphoribosyltransferase (Wolinella succinogenes (strain ATCC 29543 / DSM 1740 / CCUG 13145 / JCM 31913 / LMG 7466 / NCTC 11488 / FDC 602W) (Vibrio succinogenes)).